A 118-amino-acid chain; its full sequence is Large ribosomal subunit protein bL19 (118 aa).

Belongs to the bacterial ribosomal protein bL19 family.

Functionally, this protein is located at the 30S-50S ribosomal subunit interface and may play a role in the structure and function of the aminoacyl-tRNA binding site. This chain is Large ribosomal subunit protein bL19, found in Metamycoplasma arthritidis (strain 158L3-1) (Mycoplasma arthritidis).